The chain runs to 185 residues: Large ribosomal subunit protein uL5 (185 aa).

It belongs to the universal ribosomal protein uL5 family. As to quaternary structure, part of the 50S ribosomal subunit; contacts the 5S rRNA and probably tRNA. Forms a bridge to the 30S subunit in the 70S ribosome.

Functionally, this is one of the proteins that bind and probably mediate the attachment of the 5S RNA into the large ribosomal subunit, where it forms part of the central protuberance. In the 70S ribosome it contacts protein S13 of the 30S subunit (bridge B1b), connecting the 2 subunits; this bridge is implicated in subunit movement. May contact the P site tRNA; the 5S rRNA and some of its associated proteins might help stabilize positioning of ribosome-bound tRNAs. This is Large ribosomal subunit protein uL5 from Haloquadratum walsbyi (strain DSM 16790 / HBSQ001).